Here is a 544-residue protein sequence, read N- to C-terminus: Protein angel homolog 2 (544 aa).

The protein belongs to the CCR4/nocturin family.

This chain is Protein angel homolog 2 (Angel2), found in Mus musculus (Mouse).